The following is a 338-amino-acid chain: Tetraacyldisaccharide 4'-kinase (338 aa).

An ATP-binding site is contributed by 49-56 (TVGGTGKT).

The protein belongs to the LpxK family.

The catalysed reaction is a lipid A disaccharide + ATP = a lipid IVA + ADP + H(+). The protein operates within glycolipid biosynthesis; lipid IV(A) biosynthesis; lipid IV(A) from (3R)-3-hydroxytetradecanoyl-[acyl-carrier-protein] and UDP-N-acetyl-alpha-D-glucosamine: step 6/6. Functionally, transfers the gamma-phosphate of ATP to the 4'-position of a tetraacyldisaccharide 1-phosphate intermediate (termed DS-1-P) to form tetraacyldisaccharide 1,4'-bis-phosphate (lipid IVA). The polypeptide is Tetraacyldisaccharide 4'-kinase (Geobacter metallireducens (strain ATCC 53774 / DSM 7210 / GS-15)).